The chain runs to 185 residues: MTLAKNQKSSLSRLYKKVSSKRSESSRNLEDESRTSSNSSGSSSLNVNELRTVFDYMDANSDGKISGEELQSCVSLLGGALSSREVEEVVKTSDVDGDGFIDFEEFLKLMEGEDGSDEERRKELKEAFGMYVMEGEEFITAASLRRTLSRLGESCTVDACKVMIRGFDQNDDGVLSFDEFVLMMR.

Residues 1–12 (MTLAKNQKSSLS) show a composition bias toward polar residues. Positions 1–45 (MTLAKNQKSSLSRLYKKVSSKRSESSRNLEDESRTSSNSSGSSSL) are disordered. The segment covering 21–34 (KRSESSRNLEDESR) has biased composition (basic and acidic residues). Low complexity predominate over residues 35 to 44 (TSSNSSGSSS). 4 consecutive EF-hand domains span residues 45-80 (LNVN…LGGA), 81-116 (LSSR…EDGS), 119-154 (ERRK…LGES), and 155-185 (CTVD…LMMR). Ca(2+) is bound by residues Asp58, Asn60, Asp62, Lys64, Glu69, Asp94, Asp96, Asp98, and Glu105. 4 residues coordinate Ca(2+): Asp168, Asn170, Asp172, and Glu179.

Binds to ABCG36. Expressed in cotyledons, stipule, young leaves and at the hypocotyl-root junction. In mature root, expressed in the stele, cortex, emerging lateral root, root tip and root cap. In mature plant, expressed at the base of cauline and floral branches, and in rosette and cauline leaves. Expressed from stage 9 to 14 of flower development in anthers. At stage 15, expressed in carpel, sepals, petals and pollen until dehiscence. Expressed in developing seeds and young siliques.

Functionally, potential calcium sensor that binds calcium in vitro. This chain is Calcium-binding protein CML37, found in Arabidopsis thaliana (Mouse-ear cress).